Consider the following 338-residue polypeptide: Ketol-acid reductoisomerase (NADP(+)) (338 aa).

Residues 1-181 (MQVYYDKDCD…GGGRTGIIET (181 aa)) form the KARI N-terminal Rossmann domain. NADP(+)-binding positions include 24–27 (YGSQ), arginine 47, serine 50, serine 52, and 82–85 (DEFQ). Residue histidine 107 is part of the active site. Glycine 133 contributes to the NADP(+) binding site. A KARI C-terminal knotted domain is found at 182–327 (TFKDETETDL…EKLRSMMPWI (146 aa)). 4 residues coordinate Mg(2+): aspartate 190, glutamate 194, glutamate 226, and glutamate 230. Residue serine 251 participates in substrate binding.

The protein belongs to the ketol-acid reductoisomerase family. Requires Mg(2+) as cofactor.

It catalyses the reaction (2R)-2,3-dihydroxy-3-methylbutanoate + NADP(+) = (2S)-2-acetolactate + NADPH + H(+). It carries out the reaction (2R,3R)-2,3-dihydroxy-3-methylpentanoate + NADP(+) = (S)-2-ethyl-2-hydroxy-3-oxobutanoate + NADPH + H(+). Its pathway is amino-acid biosynthesis; L-isoleucine biosynthesis; L-isoleucine from 2-oxobutanoate: step 2/4. It functions in the pathway amino-acid biosynthesis; L-valine biosynthesis; L-valine from pyruvate: step 2/4. In terms of biological role, involved in the biosynthesis of branched-chain amino acids (BCAA). Catalyzes an alkyl-migration followed by a ketol-acid reduction of (S)-2-acetolactate (S2AL) to yield (R)-2,3-dihydroxy-isovalerate. In the isomerase reaction, S2AL is rearranged via a Mg-dependent methyl migration to produce 3-hydroxy-3-methyl-2-ketobutyrate (HMKB). In the reductase reaction, this 2-ketoacid undergoes a metal-dependent reduction by NADPH to yield (R)-2,3-dihydroxy-isovalerate. This is Ketol-acid reductoisomerase (NADP(+)) from Hahella chejuensis (strain KCTC 2396).